The primary structure comprises 181 residues: Ribonuclease HII (181 aa).

An RNase H type-2 domain is found at 1–181 (MICGIDEVGR…SLHRKNFKLI (181 aa)). A divalent metal cation-binding residues include Asp-6, Glu-7, and Asp-98.

It belongs to the RNase HII family. The cofactor is Mn(2+). Requires Mg(2+) as cofactor.

The protein localises to the cytoplasm. It carries out the reaction Endonucleolytic cleavage to 5'-phosphomonoester.. Its function is as follows. Endonuclease that specifically degrades the RNA of RNA-DNA hybrids. The polypeptide is Ribonuclease HII (rnhB) (Borreliella burgdorferi (strain ATCC 35210 / DSM 4680 / CIP 102532 / B31) (Borrelia burgdorferi)).